A 294-amino-acid polypeptide reads, in one-letter code: FAD-dependent monooxygenase SAT1 (294 aa).

Position 108 (Asp108) interacts with FAD.

The protein belongs to the paxM FAD-dependent monooxygenase family. The cofactor is FAD.

The protein operates within mycotoxin biosynthesis. Its function is as follows. FAD-dependent monooxygenase; part of the satratoxin SC1 cluster involved in the biosynthesis of satratoxins, trichothecene mycotoxins that are associated with human food poisonings. Satratoxins are suggested to be made by products of multiple gene clusters (SC1, SC2 and SC3) that encode 21 proteins in all, including polyketide synthases, acetyltransferases, and other enzymes expected to modify the trichothecene skeleton. SC1 encodes 10 proteins, SAT1 to SAT10. The largest are SAT8, which encodes a putative polyketide synthase (PKS) with a conventional non-reducing architecture, and SAT10, a putative protein containing four ankyrin repeats and thus may be involved in protein scaffolding. The putative short-chain reductase SAT3 may assist the PKS in some capacity. SAT6 contains a secretory lipase domain and acts probably as a trichothecene esterase. SAT5 encodes a putative acetyltransferase, and so, with SAT6, may affect endogenous protection from toxicity. The probable transcription factor SAT9 may regulate the expression of the SC1 cluster. SC2 encodes proteins SAT11 to SAT16, the largest of which encodes the putative reducing PKS SAT13. SAT11 is a cytochrome P450 monooxygenase, while SAT14 and SAT16 are probable acetyltransferases. The SC2 cluster may be regulated by the transcription factor SAT15. SC3 is a small cluster that encodes 5 proteins, SAT17 to SAT21. SAT21 is a putative MFS-type transporter which may have a role in exporting secondary metabolites. The four other proteins putatively encoded in SC3 include the taurine hydroxylase-like protein SAT17, the O-methyltransferase SAT18, the acetyltransferase SAT19, and the Cys6-type zinc finger SAT20, the latter being probably involved in regulation of SC3 expression. The sequence is that of FAD-dependent monooxygenase SAT1 from Stachybotrys chartarum (strain CBS 109288 / IBT 7711) (Toxic black mold).